Reading from the N-terminus, the 427-residue chain is 3-phosphoshikimate 1-carboxyvinyltransferase (427 aa).

Lys20, Ser21, and Arg25 together coordinate 3-phosphoshikimate. Lys20 provides a ligand contact to phosphoenolpyruvate. 2 residues coordinate phosphoenolpyruvate: Gly92 and Arg120. 3-phosphoshikimate contacts are provided by Ser166, Gln168, Asp312, and Lys339. Gln168 serves as a coordination point for phosphoenolpyruvate. Asp312 (proton acceptor) is an active-site residue. Phosphoenolpyruvate contacts are provided by Arg343 and Arg385.

This sequence belongs to the EPSP synthase family. As to quaternary structure, monomer.

It is found in the cytoplasm. The catalysed reaction is 3-phosphoshikimate + phosphoenolpyruvate = 5-O-(1-carboxyvinyl)-3-phosphoshikimate + phosphate. Its pathway is metabolic intermediate biosynthesis; chorismate biosynthesis; chorismate from D-erythrose 4-phosphate and phosphoenolpyruvate: step 6/7. In terms of biological role, catalyzes the transfer of the enolpyruvyl moiety of phosphoenolpyruvate (PEP) to the 5-hydroxyl of shikimate-3-phosphate (S3P) to produce enolpyruvyl shikimate-3-phosphate and inorganic phosphate. This Streptococcus pneumoniae (strain 70585) protein is 3-phosphoshikimate 1-carboxyvinyltransferase.